We begin with the raw amino-acid sequence, 46 residues long: Denclatoxin-B (46 aa).

Disulfide bonds link Cys3–Cys40, Cys4–Cys32, and Cys16–Cys26.

This sequence belongs to the plant thionin (TC 1.C.44) family.

It localises to the secreted. Its function is as follows. Thionins are small plant proteins which are toxic to animal cells. They seem to exert their toxic effect at the level of the cell membrane. Their precise function is not known. In Dendrophthora clavata (Columbian mistletoe), this protein is Denclatoxin-B.